The sequence spans 388 residues: Carbohydrate sulfotransferase 4 (388 aa).

The Cytoplasmic portion of the chain corresponds to 1–7 (MMLLKKG). A helical; Signal-anchor for type II membrane protein membrane pass occupies residues 8–28 (RLLMFLGSQVIVVALFIHMSV). Residues 29–388 (HRHLSQREES…HILGQVFREG (360 aa)) lie on the Lumenal side of the membrane. Residues 50–56 (WRSGSSF) and 204–212 (RDPRAVFRS) each bind 3'-phosphoadenylyl sulfate. Residues asparagine 307, asparagine 328, and asparagine 369 are each glycosylated (N-linked (GlcNAc...) asparagine).

It belongs to the sulfotransferase 1 family. Gal/GlcNAc/GalNAc subfamily. Monomer. In terms of tissue distribution, specifically expressed in high endothelial venules (HEV) of peripheral lymph nodes.

The protein localises to the golgi apparatus membrane. It catalyses the reaction 3-O-{N-acetyl-beta-D-glucosaminyl-(1-&gt;3)-beta-D-galactosyl-(1-&gt;3)-N-acetyl-alpha-D-galactosaminyl}-L-threonyl-[protein] + 3'-phosphoadenylyl sulfate = 3-O-{6-O-sulfo-N-acetyl-beta-D-glucosaminyl-(1-&gt;3)-beta-D-galactosyl-(1-&gt;3)-N-acetyl-alpha-D-galactosaminyl}-L-threonyl-[protein] + adenosine 3',5'-bisphosphate + H(+). The enzyme catalyses 3-O-{N-acetyl-beta-D-glucosaminyl-(1-&gt;3)-beta-D-galactosyl-(1-&gt;3)-N-acetyl-alpha-D-galactosaminyl}-L-seryl-[protein] + 3'-phosphoadenylyl sulfate = 3-O-{6-O-sulfo-N-acetyl-beta-D-glucosaminyl-(1-&gt;3)-beta-D-galactosyl-(1-&gt;3)-N-acetyl-alpha-D-galactosaminyl}-L-seryl-[protein] + adenosine 3',5'-bisphosphate + H(+). The catalysed reaction is a 3-O-{beta-D-galactosyl-(1-&gt;3)-[N-acetyl-beta-D-glucosaminyl-(1-&gt;6)]-N-acetyl-alpha-D-galactosaminyl}-L-threonyl-[protein] + 3'-phosphoadenylyl sulfate = 3-O-{beta-D-galactosyl-(1-&gt;3)-[6-O-sulfo-N-acetyl-beta-D-glucosaminyl-(1-&gt;6)]-N-acetyl-alpha-D-galactosaminyl}-L-threonyl-[protein] + adenosine 3',5'-bisphosphate + H(+). It carries out the reaction 3-O-{beta-D-galactosyl-(1-&gt;3)-[N-acetyl-beta-D-glucosaminyl-(1-&gt;6)]-N-acetyl-alpha-D-galactosaminyl}-L-seryl-[protein] + 3'-phosphoadenylyl sulfate = 3-O-{beta-D-galactosyl-(1-&gt;3)-[6-O-sulfo-N-acetyl-beta-D-glucosaminyl-(1-&gt;6)]-N-acetyl-alpha-D-galactosaminyl}-L-seryl-[protein] + adenosine 3',5'-bisphosphate + H(+). Its pathway is protein modification; carbohydrate sulfation. In terms of biological role, sulfotransferase involved in SELL/L-selectin ligand biosynthesis pathway. Catalyzes the transfer of the sulfate group from 3'-phospho-5'-adenylyl sulfate (PAPS) onto the hydroxyl group at C-6 position of the non-reducing N-acetylglucosamine (GlcNAc) residue within O-linked mucin-type glycans. Contributes to generate sialyl 6-sulfo Lewis X determinant (also known as MECA-79 epitope) for SELL recognition, a prerequisite for continuous lymphocyte homing into peripheral lymph nodes and antigen immune surveillance. Transfers the sulfate group primarily on core 2 GlcNAcbeta1-6(Galbeta1-3)GalNAcalphaSer/Thr and extended core 1 GlcNAcbeta1-3Galbeta1-3GalNAcalphaSer/Thr based O-linked glycans on CD34 and GLYCAM1 peripheral node addressins (PNAds) expressed on the lumenal side of high endothelial venules (HEVs). The recognition of PNAds by SELL initiates a multistep process comprising tethering and rolling of blood lymphocytes on HEVs against the blood flow, followed by chemokine signaling, integrin-mediated lymphocyte adhesion onto endothelial cells and lymphocyte transendothelial migration. Modulates rolling velocity and differential T and B lymphocyte recruitment into peripheral lymph nodes, with a major role in B lymphocyte homing. Might be redundant in sulfation of MADCAM1 and lymphocyte trafficking to mesenteric lymph nodes. Can also sulfonate core 3 GlcNAcbeta1-3GalNAc-R based glycans as well as GlcNAcbeta1-3Galbeta1-Glc, GlcNAcbeta1-6ManOMe and GlcNAcbeta1-2Man oligosaccharides, which might be ectopically expressed during tumorigenesis. This is Carbohydrate sulfotransferase 4 (Chst4) from Mus musculus (Mouse).